Reading from the N-terminus, the 100-residue chain is Urease subunit gamma (100 aa).

Belongs to the urease gamma subunit family. As to quaternary structure, heterotrimer of UreA (gamma), UreB (beta) and UreC (alpha) subunits. Three heterotrimers associate to form the active enzyme.

It localises to the cytoplasm. The enzyme catalyses urea + 2 H2O + H(+) = hydrogencarbonate + 2 NH4(+). It participates in nitrogen metabolism; urea degradation; CO(2) and NH(3) from urea (urease route): step 1/1. This chain is Urease subunit gamma, found in Methylocella silvestris (strain DSM 15510 / CIP 108128 / LMG 27833 / NCIMB 13906 / BL2).